We begin with the raw amino-acid sequence, 211 residues long: Thiamine-phosphate synthase (211 aa).

4-amino-2-methyl-5-(diphosphooxymethyl)pyrimidine is bound by residues 37–41 (QLRIK) and Asn-69. Asp-70 and Asp-89 together coordinate Mg(2+). Ser-108 contributes to the 4-amino-2-methyl-5-(diphosphooxymethyl)pyrimidine binding site. 134 to 136 (TQT) is a binding site for 2-[(2R,5Z)-2-carboxy-4-methylthiazol-5(2H)-ylidene]ethyl phosphate. A 4-amino-2-methyl-5-(diphosphooxymethyl)pyrimidine-binding site is contributed by Lys-137. 2-[(2R,5Z)-2-carboxy-4-methylthiazol-5(2H)-ylidene]ethyl phosphate contacts are provided by residues Gly-166 and 186 to 187 (VS).

This sequence belongs to the thiamine-phosphate synthase family. Mg(2+) is required as a cofactor.

The enzyme catalyses 2-[(2R,5Z)-2-carboxy-4-methylthiazol-5(2H)-ylidene]ethyl phosphate + 4-amino-2-methyl-5-(diphosphooxymethyl)pyrimidine + 2 H(+) = thiamine phosphate + CO2 + diphosphate. It carries out the reaction 2-(2-carboxy-4-methylthiazol-5-yl)ethyl phosphate + 4-amino-2-methyl-5-(diphosphooxymethyl)pyrimidine + 2 H(+) = thiamine phosphate + CO2 + diphosphate. The catalysed reaction is 4-methyl-5-(2-phosphooxyethyl)-thiazole + 4-amino-2-methyl-5-(diphosphooxymethyl)pyrimidine + H(+) = thiamine phosphate + diphosphate. It functions in the pathway cofactor biosynthesis; thiamine diphosphate biosynthesis; thiamine phosphate from 4-amino-2-methyl-5-diphosphomethylpyrimidine and 4-methyl-5-(2-phosphoethyl)-thiazole: step 1/1. Functionally, condenses 4-methyl-5-(beta-hydroxyethyl)thiazole monophosphate (THZ-P) and 2-methyl-4-amino-5-hydroxymethyl pyrimidine pyrophosphate (HMP-PP) to form thiamine monophosphate (TMP). This Klebsiella pneumoniae subsp. pneumoniae (strain ATCC 700721 / MGH 78578) protein is Thiamine-phosphate synthase.